The chain runs to 665 residues: MTDRLKCLIWYCIDNQNYDNSIFYSERLHAIEDSNESLYLLAYSHFLNLDYNIVYDLLDRVISHVPCTYLFARTSLILGRYKQGISAVEACRSNWRSIQPNINDSISSRGHPDASCMLDVLGTMYKKAGFLKKATDCFVEAVSINPYNFSAFQNLTAIGVPLDANNVFVIPPYLTAMKGFEKSQTNATASVPEPSFLKKSKESSSSSNKFSVSESIANSYSNSSISAFTKWFDRVDASELPGSEKERHQSLKLQSQSQTSKNLLAFNDAQKADSNNRDTSLKSHFVEPRTQALRPGARLTYKLREARSSKRGESTPQSFREEDNNLMELLKLFGKGVYLLAQYKLREALNCFQSLPIEQQNTPFVLAKLGITYFELVDYEKSEEVFQKLRDLSPSRVKDMEVFSTALWHLQKSVPLSYLAHETLETNPYSPESWCILANCFSLQREHSQALKCINRAIQLDPTFEYAYTLQGHEHSANEEYEKSKTSFRKAIRVNVRHYNAWYGLGMVYLKTGRNDQADFHFQRAAEINPNNSVLITCIGMIYERCKDYKKALDFYDRACKLDEKSSLARFKKAKVLILLHDHDKALVELEQLKAIAPDEANVHFLLGKIFKQMRKKNLALKHFTIAWNLDGKATHIIKESIENLDIPEENLLTETGEIYRNLET.

Residues 115–148 (SCMLDVLGTMYKKAGFLKKATDCFVEAVSINPYN) form a TPR 1 repeat. The DNA-binding element occupies 191 to 257 (VPEPSFLKKS…HQSLKLQSQS (67 aa)). 8 TPR repeats span residues 329-362 (LLKL…QQNT), 363-396 (PFVL…SPSR), 431-464 (PESW…DPTF), 466-498 (YAYT…NVRH), 499-532 (YNAW…NPNN), 534-566 (VLIT…DEKS), 568-600 (LARF…APDE), and 601-634 (ANVH…DGKA).

This sequence belongs to the APC3/CDC27 family. As to quaternary structure, the APC/C is composed of at least 13 subunits: apc1, apc2, nuc2, apc4, apc5, cut9, apc8, apc10, apc11, hcn1, apc13, apc14 and apc15. Interacts with apc10 and cut9.

It localises to the nucleus. Component of the anaphase-promoting complex/cyclosome (APC/C), a cell cycle-regulated E3 ubiquitin-protein ligase complex that controls progression through mitosis and the G1 phase of the cell cycle. The APC/C is thought to confer substrate specificity and, in the presence of ubiquitin-conjugating E2 enzymes, it catalyzes the formation of protein-ubiquitin conjugates that are subsequently degraded by the 26S proteasome. Interacts with spindle apparatus, chromosomes, or nuclear envelope, and interconnect nuclear and cytoskeletal functions in mitosis, so the elongation of the spindle in anaphase is blocked. In Schizosaccharomyces pombe (strain 972 / ATCC 24843) (Fission yeast), this protein is Anaphase-promoting complex subunit 3 (nuc2).